Consider the following 401-residue polypeptide: Mannonate dehydratase (401 aa).

Belongs to the mannonate dehydratase family. Requires Fe(2+) as cofactor. Mn(2+) is required as a cofactor.

The catalysed reaction is D-mannonate = 2-dehydro-3-deoxy-D-gluconate + H2O. It participates in carbohydrate metabolism; pentose and glucuronate interconversion. Catalyzes the dehydration of D-mannonate. This chain is Mannonate dehydratase, found in Brucella melitensis biotype 2 (strain ATCC 23457).